Reading from the N-terminus, the 234-residue chain is 7-cyano-7-deazaguanine synthase (234 aa).

ATP is bound at residue 13 to 23 (LSGGQDSTTCL). Positions 193, 201, 204, and 207 each coordinate Zn(2+).

Belongs to the QueC family. Zn(2+) is required as a cofactor.

The enzyme catalyses 7-carboxy-7-deazaguanine + NH4(+) + ATP = 7-cyano-7-deazaguanine + ADP + phosphate + H2O + H(+). Its pathway is purine metabolism; 7-cyano-7-deazaguanine biosynthesis. Functionally, catalyzes the ATP-dependent conversion of 7-carboxy-7-deazaguanine (CDG) to 7-cyano-7-deazaguanine (preQ(0)). This is 7-cyano-7-deazaguanine synthase from Chromobacterium violaceum (strain ATCC 12472 / DSM 30191 / JCM 1249 / CCUG 213 / NBRC 12614 / NCIMB 9131 / NCTC 9757 / MK).